Here is a 210-residue protein sequence, read N- to C-terminus: Oligoribonuclease (210 aa).

Residues 12 to 177 (LVWIDLEMTG…ADIVESIREL (166 aa)) form the Exonuclease domain. The active site involves Y134.

It belongs to the oligoribonuclease family.

It localises to the cytoplasm. Functionally, 3'-to-5' exoribonuclease specific for small oligoribonucleotides. The chain is Oligoribonuclease from Corynebacterium diphtheriae (strain ATCC 700971 / NCTC 13129 / Biotype gravis).